Consider the following 929-residue polypeptide: Bifunctional glutamine synthetase adenylyltransferase/adenylyl-removing enzyme (929 aa).

Residues 1–423 (MSTPIDSSRA…RHFEQIFAAR (423 aa)) are adenylyl removase. Residues 433-929 (ARIRPEQSGD…FQLWEDIFGT (497 aa)) form an adenylyl transferase region.

The protein belongs to the GlnE family. Mg(2+) is required as a cofactor.

The catalysed reaction is [glutamine synthetase]-O(4)-(5'-adenylyl)-L-tyrosine + phosphate = [glutamine synthetase]-L-tyrosine + ADP. The enzyme catalyses [glutamine synthetase]-L-tyrosine + ATP = [glutamine synthetase]-O(4)-(5'-adenylyl)-L-tyrosine + diphosphate. Involved in the regulation of glutamine synthetase GlnA, a key enzyme in the process to assimilate ammonia. When cellular nitrogen levels are high, the C-terminal adenylyl transferase (AT) inactivates GlnA by covalent transfer of an adenylyl group from ATP to specific tyrosine residue of GlnA, thus reducing its activity. Conversely, when nitrogen levels are low, the N-terminal adenylyl removase (AR) activates GlnA by removing the adenylyl group by phosphorolysis, increasing its activity. The regulatory region of GlnE binds the signal transduction protein PII (GlnB) which indicates the nitrogen status of the cell. In Nitrosomonas europaea (strain ATCC 19718 / CIP 103999 / KCTC 2705 / NBRC 14298), this protein is Bifunctional glutamine synthetase adenylyltransferase/adenylyl-removing enzyme.